A 74-amino-acid chain; its full sequence is Major structural pilin EpdE (74 aa).

Residues 1–12 constitute a propeptide that is removed on maturation; that stretch reads MKFLEKLTSKKG. Glutamine 13 bears the Pyrrolidone carboxylic acid mark. A QXSXEXXXL motif is present at residues 13-21; sequence QIAMELGIL.

Post-translationally, the N-terminus is cleaved by the prepilin peptidase EppA, which recognizes the class III signal sequence. N-glycosylated. Glycosylated with an N-linked branched pentasaccharide glycan. May contain glycans at three sites. Glycosylation is AglB-dependent. The N-glycosylation does not occur unless the signal peptide has been cleaved first.

It localises to the secreted. The protein resides in the cell surface. The protein localises to the fimbrium. In terms of biological role, major component of the type IV-like pili. This chain is Major structural pilin EpdE, found in Methanococcus maripaludis (strain DSM 14266 / JCM 13030 / NBRC 101832 / S2 / LL).